The following is a 1411-amino-acid chain: Regulating synaptic membrane exocytosis protein 2 (1411 aa).

The tract at residues 1–33 (MSAPVGPRGRLAPIPAASQPPLQPEMPDLSHLT) is disordered. Residues 26–185 (MPDLSHLTEE…TKSGAWFYNS (160 aa)) enclose the RabBD domain. The segment at 117–173 (KGDAPTCGICHKTKFADGCGHNCSYCQTKFCARCGGRVSLRSNKVMWVCNLCRKQQE) adopts an FYVE-type zinc-finger fold. Residues cysteine 123, cysteine 126, cysteine 139, cysteine 142, cysteine 147, cysteine 150, cysteine 165, and cysteine 168 each contribute to the Zn(2+) site. 6 stretches are compositionally biased toward basic and acidic residues: residues 203–216 (NEEA…KLHE), 273–287 (DQNR…REEY), 318–329 (DSDHLSYRDSNR), 348–366 (RDEY…RYRS), 382–401 (EQMR…RHSD), and 410–434 (EDSR…RRAA). 2 disordered regions span residues 203-598 (NEEA…SERQ) and 623-650 (SGVD…WQPS). Phosphoserine is present on serine 400. A compositionally biased stretch (polar residues) spans 451–463 (GPSSYAQRTTNHS). A compositionally biased stretch (basic and acidic residues) spans 475–492 (DRPDLRRTDSLRKQHHLD). Residues 510–521 (RNDSLSSDQSES) are compositionally biased toward polar residues. The segment covering 528–537 (KPHKSKKGGK) has biased composition (basic residues). Over residues 558 to 568 (SCDDVEIESES) the composition is skewed to acidic residues. Composition is skewed to basic and acidic residues over residues 569–583 (VSEK…RKTS) and 634–644 (NEEHSHSDKHP). The 87-residue stretch at 668–754 (DGSVPRDSGA…EPQVELVVSR (87 aa)) folds into the PDZ domain. Threonine 689 bears the Phosphothreonine mark. A disordered region spans residues 762-793 (IPDSTHAQLESSSSSFESQKMDRPSISVTSPM). Serine 791 and serine 794 each carry phosphoserine. The region spanning 805 to 928 (LSGQLSIKLW…ALLDDEPHWY (124 aa)) is the C2 1 domain. 2 disordered regions span residues 939–973 (PLPH…SEVS) and 993–1190 (DLQS…STET). 2 stretches are compositionally biased toward polar residues: residues 994–1015 (LQSS…SPSG) and 1049–1059 (RTMTGHYNTIS). Over residues 1060–1113 (RMDRHRVMDDHYSPDRDRDCEAADRQPYHRSRSTEQRPLLERTTTRSRSTERPD) the composition is skewed to basic and acidic residues. Over residues 1143–1153 (GSVQTSPSSTP) the composition is skewed to polar residues. Phosphoserine is present on serine 1148. Residues 1257-1375 (AMGDIQVGMM…ELSNMVIGWF (119 aa)) form the C2 2 domain. 2 positions are modified to phosphoserine: serine 1396 and serine 1399.

In terms of assembly, interacts with RAB3A and RAB3B that have been activated by GTP-binding. Interacts with RAB3C, RAB3D and RAB26. Interacts with TSPOAP1 and RIMBP2. Interacts with PPFIA3 and PPFIA4. Interacts via its zinc finger with the first C2 domain of UNC13A. Forms a complex consisting of UNC13A, RIMS2 and RAB3A. Heterodimer with PCLO. Part of a ternary complex involving PCLO and EPAC2. Widely expressed. Expressed in melanocytes. In fetal tissues, predominantly expressed in the brain. In the retina, expressed in the outer plexiform layer (at protein level). In the cerebellum, expressed in Purkinje cells (at protein level). In the pancreas, expressed in Langerhans islets (at protein level).

The protein resides in the cell membrane. It localises to the synapse. Its subcellular location is the presynaptic cell membrane. In terms of biological role, rab effector involved in exocytosis. May act as scaffold protein. Plays a role in dendrite formation by melanocytes. The sequence is that of Regulating synaptic membrane exocytosis protein 2 (RIMS2) from Homo sapiens (Human).